A 427-amino-acid chain; its full sequence is Glutamate-1-semialdehyde 2,1-aminomutase 1 (427 aa).

K265 is subject to N6-(pyridoxal phosphate)lysine.

The protein belongs to the class-III pyridoxal-phosphate-dependent aminotransferase family. HemL subfamily. As to quaternary structure, homodimer. Requires pyridoxal 5'-phosphate as cofactor.

The protein resides in the cytoplasm. The enzyme catalyses (S)-4-amino-5-oxopentanoate = 5-aminolevulinate. Its pathway is porphyrin-containing compound metabolism; protoporphyrin-IX biosynthesis; 5-aminolevulinate from L-glutamyl-tRNA(Glu): step 2/2. The chain is Glutamate-1-semialdehyde 2,1-aminomutase 1 from Lachnoclostridium phytofermentans (strain ATCC 700394 / DSM 18823 / ISDg) (Clostridium phytofermentans).